The primary structure comprises 668 residues: UvrABC system protein B (668 aa).

Positions 25–170 (NSILLGNKYQ…FVGQKISIKE (146 aa)) constitute a Helicase ATP-binding domain. 38-45 (GVTGSGKT) contributes to the ATP binding site. Residues 91 to 114 (YYDYYQPESYVPSKDLFIEKEATI) carry the Beta-hairpin motif. The Helicase C-terminal domain maps to 429 to 595 (QMEDLYSEIQ…TIVKKIQNIL (167 aa)). One can recognise a UVR domain in the interval 622–657 (KKLIDKLKFDLEEAVNDERFEDAIVLRDKIKELSSK).

Belongs to the UvrB family. Forms a heterotetramer with UvrA during the search for lesions. Interacts with UvrC in an incision complex.

The protein localises to the cytoplasm. The UvrABC repair system catalyzes the recognition and processing of DNA lesions. A damage recognition complex composed of 2 UvrA and 2 UvrB subunits scans DNA for abnormalities. Upon binding of the UvrA(2)B(2) complex to a putative damaged site, the DNA wraps around one UvrB monomer. DNA wrap is dependent on ATP binding by UvrB and probably causes local melting of the DNA helix, facilitating insertion of UvrB beta-hairpin between the DNA strands. Then UvrB probes one DNA strand for the presence of a lesion. If a lesion is found the UvrA subunits dissociate and the UvrB-DNA preincision complex is formed. This complex is subsequently bound by UvrC and the second UvrB is released. If no lesion is found, the DNA wraps around the other UvrB subunit that will check the other stand for damage. The protein is UvrABC system protein B of Borreliella burgdorferi (strain ZS7) (Borrelia burgdorferi).